A 519-amino-acid polypeptide reads, in one-letter code: Demethylepipodophyllotoxin synthase (519 aa).

Residues 6–26 (CLETLLLGFFVLLPCFFYFVW) traverse the membrane as a helical segment. Position 458 (Cys458) interacts with heme.

Belongs to the cytochrome P450 family. The cofactor is heme. In terms of tissue distribution, rhizome-specific expression.

The protein localises to the membrane. It carries out the reaction (-)-4'-desmethyl-deoxypodophyllotoxin + reduced [NADPH--hemoprotein reductase] + O2 = 4'-demethylepipodophyllotoxin + oxidized [NADPH--hemoprotein reductase] + H2O + H(+). Its pathway is aromatic compound metabolism; phenylpropanoid biosynthesis. Its function is as follows. Cytochrome P450 involved in the biosynthesis of etoposide, a chemotherapeutic compound of the topoisomerase inhibitor family. Catalyzes the hydroxylation of deoxypodophyllotoxin to form epipodophyllotoxin. The chain is Demethylepipodophyllotoxin synthase from Sinopodophyllum hexandrum (Himalayan may apple).